A 481-amino-acid polypeptide reads, in one-letter code: MSQDLWSFCLSRLEHELPPQQFNTWIKTLQADEEKAGASVALRLVAPSRFVLQWVRERYLRRIGELGAEFHGAPIEIELVLPAAGAARPAARPVIGSGPVAGPAPAPTPSQAPAATAAAPAVVTRPAEPESSIVTASDLAYEKTRLNADFTFDTLVTGRANDLARAAAMQVAQNPGTSYNPLFVYGGVGLGKTHLVHAIGNAVYRHNPRAVIRYVHVEDYYADVVRAYQQKSFDAFKRYYRSLDLLLIDDIQFFNNKNRTQEEFFHAFNALTEARKQIVITCDTYPKDIQGLEDRLISRFDWGLTVQIEPPELEMRVAILQKKAEALRVDLHDDVAFLIAKNLRSNVRELEGALNKVVAFARFHGRGITLEVAKDALKDLLNAHNRQLTIEHIQKTVADYYKIKVADMHSKKRTRVIARPRQVAMWLAKDLTPMSLPAIGEAFGGRDHTTVMHACRTIAELRLGDHQLNHDVHVLTQVLRG.

Residues 1–74 (MSQDLWSFCL…ELGAEFHGAP (74 aa)) form a domain I, interacts with DnaA modulators region. A domain II region spans residues 74-144 (PIEIELVLPA…TASDLAYEKT (71 aa)). The segment at 101–123 (AGPAPAPTPSQAPAATAAAPAVV) is disordered. Over residues 111–123 (QAPAATAAAPAVV) the composition is skewed to low complexity. Positions 145 to 361 (RLNADFTFDT…GALNKVVAFA (217 aa)) are domain III, AAA+ region. Residues glycine 189, glycine 191, lysine 192, and threonine 193 each contribute to the ATP site. Residues 362–481 (RFHGRGITLE…VHVLTQVLRG (120 aa)) are domain IV, binds dsDNA.

It belongs to the DnaA family. In terms of assembly, oligomerizes as a right-handed, spiral filament on DNA at oriC.

Its subcellular location is the cytoplasm. In terms of biological role, plays an essential role in the initiation and regulation of chromosomal replication. ATP-DnaA binds to the origin of replication (oriC) to initiate formation of the DNA replication initiation complex once per cell cycle. Binds the DnaA box (a 9 base pair repeat at the origin) and separates the double-stranded (ds)DNA. Forms a right-handed helical filament on oriC DNA; dsDNA binds to the exterior of the filament while single-stranded (ss)DNA is stabiized in the filament's interior. The ATP-DnaA-oriC complex binds and stabilizes one strand of the AT-rich DNA unwinding element (DUE), permitting loading of DNA polymerase. After initiation quickly degrades to an ADP-DnaA complex that is not apt for DNA replication. Binds acidic phospholipids. The protein is Chromosomal replication initiator protein DnaA of Aromatoleum aromaticum (strain DSM 19018 / LMG 30748 / EbN1) (Azoarcus sp. (strain EbN1)).